The primary structure comprises 357 residues: 4-hydroxy-3-methylbut-2-en-1-yl diphosphate synthase (flavodoxin) (357 aa).

[4Fe-4S] cluster-binding residues include Cys264, Cys267, Cys299, and Glu306.

Belongs to the IspG family. The cofactor is [4Fe-4S] cluster.

It carries out the reaction (2E)-4-hydroxy-3-methylbut-2-enyl diphosphate + oxidized [flavodoxin] + H2O + 2 H(+) = 2-C-methyl-D-erythritol 2,4-cyclic diphosphate + reduced [flavodoxin]. It participates in isoprenoid biosynthesis; isopentenyl diphosphate biosynthesis via DXP pathway; isopentenyl diphosphate from 1-deoxy-D-xylulose 5-phosphate: step 5/6. Converts 2C-methyl-D-erythritol 2,4-cyclodiphosphate (ME-2,4cPP) into 1-hydroxy-2-methyl-2-(E)-butenyl 4-diphosphate. This is 4-hydroxy-3-methylbut-2-en-1-yl diphosphate synthase (flavodoxin) from Campylobacter jejuni subsp. jejuni serotype O:6 (strain 81116 / NCTC 11828).